The primary structure comprises 326 residues: Dipeptide transport ATP-binding protein DppD (326 aa).

Residues Ile-5–Ile-255 form the ABC transporter domain. Residues Ala-44–Thr-49, Asn-61, and Gln-97 each bind ATP. 4 residues coordinate [4Fe-4S] cluster: Cys-285, Cys-291, Cys-298, and Cys-316.

This sequence belongs to the ABC transporter superfamily.

The protein resides in the cell membrane. It catalyses the reaction a dipeptide(out) + ATP + H2O = a dipeptide(in) + ADP + phosphate + H(+). With respect to regulation, the C-terminal iron-sulfur cluster may stabilize the structure of the C-terminal loops and may function in the regulation of the transport process. Part of the ABC transporter Dpp involved in dipeptide transport. Responsible for energy coupling to the transport system. The sequence is that of Dipeptide transport ATP-binding protein DppD from Caldanaerobacter subterraneus subsp. tengcongensis (strain DSM 15242 / JCM 11007 / NBRC 100824 / MB4) (Thermoanaerobacter tengcongensis).